A 335-amino-acid chain; its full sequence is N-lysine methyltransferase KMT5A-A (335 aa).

2 disordered regions span residues 1–91 (MGRG…EVEK) and 133–183 (LPPE…EIES). Residues 67–91 (SVTHHESKCLGKPSTETRKKAEVEK) are compositionally biased toward basic and acidic residues. A compositionally biased stretch (basic residues) spans 145–161 (VKNKPLRKKTQRQKSPN). Residues 199–320 (EGIKMHMITG…VGEELLYDYG (122 aa)) form the SET domain. Residues 209 to 211 (KGR), Tyr-254, and 281 to 282 (NH) contribute to the S-adenosyl-L-methionine site.

It belongs to the class V-like SAM-binding methyltransferase superfamily. Histone-lysine methyltransferase family. PR/SET subfamily.

It is found in the nucleus. The protein resides in the chromosome. The catalysed reaction is L-lysyl(20)-[histone H4] + S-adenosyl-L-methionine = N(6)-methyl-L-lysyl(20)-[histone H4] + S-adenosyl-L-homocysteine + H(+). It carries out the reaction L-lysyl-[protein] + S-adenosyl-L-methionine = N(6)-methyl-L-lysyl-[protein] + S-adenosyl-L-homocysteine + H(+). Its function is as follows. Protein-lysine N-methyltransferase that monomethylates both histones and non-histone proteins. Specifically monomethylates 'Lys-20' of histone H4 (H4K20me1). H4K20me1 is enriched during mitosis and represents a specific tag for epigenetic transcriptional repression. Mainly functions in euchromatin regions, thereby playing a central role in the silencing of euchromatic genes. Required for cell proliferation, probably by contributing to the maintenance of proper higher-order structure of DNA during mitosis. Involved in chromosome condensation and proper cytokinesis. This Xenopus laevis (African clawed frog) protein is N-lysine methyltransferase KMT5A-A.